The primary structure comprises 605 residues: Elongation factor 4 (605 aa).

One can recognise a tr-type G domain in the interval 11–193 (EKIRNFSIIA…QIVEKVPAPT (183 aa)). Residues 23-28 (DHGKST) and 140-143 (NKID) contribute to the GTP site.

Belongs to the TRAFAC class translation factor GTPase superfamily. Classic translation factor GTPase family. LepA subfamily.

Its subcellular location is the cell membrane. The catalysed reaction is GTP + H2O = GDP + phosphate + H(+). In terms of biological role, required for accurate and efficient protein synthesis under certain stress conditions. May act as a fidelity factor of the translation reaction, by catalyzing a one-codon backward translocation of tRNAs on improperly translocated ribosomes. Back-translocation proceeds from a post-translocation (POST) complex to a pre-translocation (PRE) complex, thus giving elongation factor G a second chance to translocate the tRNAs correctly. Binds to ribosomes in a GTP-dependent manner. This is Elongation factor 4 from Streptococcus pyogenes serotype M4 (strain MGAS10750).